The primary structure comprises 615 residues: Dihydroxy-acid dehydratase (615 aa).

Asp81 is a binding site for Mg(2+). Cys122 contacts [2Fe-2S] cluster. Asp123 and Lys124 together coordinate Mg(2+). Position 124 is an N6-carboxylysine (Lys124). Cys193 lines the [2Fe-2S] cluster pocket. Glu489 lines the Mg(2+) pocket. The active-site Proton acceptor is the Ser515.

This sequence belongs to the IlvD/Edd family. Homodimer. [2Fe-2S] cluster is required as a cofactor. It depends on Mg(2+) as a cofactor.

The catalysed reaction is (2R)-2,3-dihydroxy-3-methylbutanoate = 3-methyl-2-oxobutanoate + H2O. It catalyses the reaction (2R,3R)-2,3-dihydroxy-3-methylpentanoate = (S)-3-methyl-2-oxopentanoate + H2O. It functions in the pathway amino-acid biosynthesis; L-isoleucine biosynthesis; L-isoleucine from 2-oxobutanoate: step 3/4. Its pathway is amino-acid biosynthesis; L-valine biosynthesis; L-valine from pyruvate: step 3/4. In terms of biological role, functions in the biosynthesis of branched-chain amino acids. Catalyzes the dehydration of (2R,3R)-2,3-dihydroxy-3-methylpentanoate (2,3-dihydroxy-3-methylvalerate) into 2-oxo-3-methylpentanoate (2-oxo-3-methylvalerate) and of (2R)-2,3-dihydroxy-3-methylbutanoate (2,3-dihydroxyisovalerate) into 2-oxo-3-methylbutanoate (2-oxoisovalerate), the penultimate precursor to L-isoleucine and L-valine, respectively. The polypeptide is Dihydroxy-acid dehydratase (Pseudomonas savastanoi pv. phaseolicola (strain 1448A / Race 6) (Pseudomonas syringae pv. phaseolicola (strain 1448A / Race 6))).